Reading from the N-terminus, the 523-residue chain is MTNPQPAIEGGISEVEIISQQVDEETKSIAPVQLVNFAYRDLPLAAVDLSTAGSQLLSNLDEDYQREGSNWLKPCCGKRAAVWQVFLLSASLNSFLVACVILVVILLTLELLIDIKLLQFSSAFQFAGVIHWISLVILSVFFSETVLRIVVLGIWDYIENKIEVFDGAVIILSLAPMVASTVANGPRSPWDAISLIIMLRIWRVKRVIDAYVLPVKLEMEMVIQQYEKAKVIQDEQLERLTQICQEQGFEIRQLRAHLAQQDLDLAAEREAALQAPHVLSQPRSRFKVLEAGTWDEETAAESVVEELQPSQEATMKDDMNSYISQYYNGPSSDSGVPEPAVCMVTTAAIDIHQPNISSDLFSLDMPLKLGGNGTSATSESASRSSVTRAQSDSSQTLGSSMDCSTAREEPSSEPGPSPPPLPSQQQVEEATVQDLLSSLSEDPCPSQKALDPAPLARPSPAGSAQTSPELEHRVSLFNQKNQEGFTVFQIRPVIHFQPTVPMLEDKFRSLESKEQKLHRVPEA.

Residues 1-94 (MTNPQPAIEG…VFLLSASLNS (94 aa)) are Cytoplasmic-facing. Residues 95-115 (FLVACVILVVILLTLELLIDI) form a helical membrane-spanning segment. The Extracellular segment spans residues 116–121 (KLLQFS). The chain crosses the membrane as a helical span at residues 122-142 (SAFQFAGVIHWISLVILSVFF). Residues 143–161 (SETVLRIVVLGIWDYIENK) lie on the Cytoplasmic side of the membrane. Residues 162–182 (IEVFDGAVIILSLAPMVASTV) form a helical membrane-spanning segment. At 183–191 (ANGPRSPWD) the chain is on the extracellular side. The chain crosses the membrane as a helical span at residues 192 to 212 (AISLIIMLRIWRVKRVIDAYV). The Cytoplasmic portion of the chain corresponds to 213 to 523 (LPVKLEMEMV…EQKLHRVPEA (311 aa)). Residues 218-270 (EMEMVIQQYEKAKVIQDEQLERLTQICQEQGFEIRQLRAHLAQQDLDLAAERE) are a coiled coil. The segment at 380 to 477 (SASRSSVTRA…PELEHRVSLF (98 aa)) is disordered. Positions 382 to 397 (SRSSVTRAQSDSSQTL) are enriched in low complexity. Residues 398 to 411 (GSSMDCSTAREEPS) show a composition bias toward polar residues. The segment covering 421–430 (LPSQQQVEEA) has biased composition (pro residues).

As to quaternary structure, homodimer; disulfide-linked. As to expression, mainly expressed in the cerebellum. Also expressed in cerebral cortex, skeletal muscle and thyroid, but at much lower levels.

The protein localises to the cell membrane. Its subcellular location is the cell projection. The protein resides in the dendrite. It localises to the perikaryon. In terms of biological role, voltage-sensor protein present on the post-synaptic side of glutamatergic mossy fibers and granule cells in the cerebellum. Despite the presence of a voltage-sensor segment, does not form a functional ion channel and its precise role remains unclear. Undergoes both rapid and slow structural rearrangements in response to changes in voltage. Contains a zinc-binding site that can regulate the slow conformational transition. This is Transmembrane protein 266 from Homo sapiens (Human).